We begin with the raw amino-acid sequence, 130 residues long: Large ribosomal subunit protein eL32 (130 aa).

The protein belongs to the eukaryotic ribosomal protein eL32 family.

The protein is Large ribosomal subunit protein eL32 (rpl32e) of Pyrococcus abyssi (strain GE5 / Orsay).